We begin with the raw amino-acid sequence, 225 residues long: Cytidylate kinase (225 aa).

Residue 12-20 (GPSGAGKGT) coordinates ATP.

It belongs to the cytidylate kinase family. Type 1 subfamily.

The protein resides in the cytoplasm. It catalyses the reaction CMP + ATP = CDP + ADP. The catalysed reaction is dCMP + ATP = dCDP + ADP. This Pectobacterium atrosepticum (strain SCRI 1043 / ATCC BAA-672) (Erwinia carotovora subsp. atroseptica) protein is Cytidylate kinase.